The following is a 176-amino-acid chain: MVCLVSRTGRQSQRYNKGRRQVVGCIPYRLKISSDGTISDEFEVLVISSQKGHALMFPKGGWELDESVEEAASRESLEEAGVVGNVERQLGKWDFLSKSKGTFYEGFMFPMLVKEELELWPEQHLRQRIWMKVDEARDACRDWWMKEALDVLVQRLSLLSLKPMEEDENLPLISIY.

A mitochondrion-targeting transit peptide spans 1–21; it reads MVCLVSRTGRQSQRYNKGRRQ. One can recognise a Nudix hydrolase domain in the interval 22 to 153; that stretch reads VVGCIPYRLK…WMKEALDVLV (132 aa). A Nudix box motif is present at residues 60–81; the sequence is GGWELDESVEEAASRESLEEAG. Residues Glu-75 and Glu-79 each contribute to the Mg(2+) site.

It belongs to the Nudix hydrolase family. It depends on Mg(2+) as a cofactor. Mn(2+) is required as a cofactor. Expressed in roots, stems and inflorescences.

The protein resides in the mitochondrion. In terms of biological role, probably mediates the hydrolysis of some nucleoside diphosphate derivatives. This is Nudix hydrolase 18, mitochondrial (NUDT18) from Arabidopsis thaliana (Mouse-ear cress).